The primary structure comprises 199 residues: Thymidine kinase (199 aa).

Residues 23–30 (GSMFSGKT) and 95–98 (DEAQ) each bind ATP. The active-site Proton acceptor is the E96. Zn(2+) is bound by residues C152, C155, C184, and C187.

This sequence belongs to the thymidine kinase family. In terms of assembly, homotetramer.

Its subcellular location is the cytoplasm. The catalysed reaction is thymidine + ATP = dTMP + ADP + H(+). The sequence is that of Thymidine kinase from Bacteroides fragilis (strain YCH46).